The primary structure comprises 474 residues: Glutamate--tRNA ligase (474 aa).

The short motif at 11-21 (PSPTGFLHIGG) is the 'HIGH' region element. Positions 240–244 (KLSKR) match the 'KMSKS' region motif. ATP is bound at residue Lys243.

Belongs to the class-I aminoacyl-tRNA synthetase family. Glutamate--tRNA ligase type 1 subfamily. Monomer.

It localises to the cytoplasm. It carries out the reaction tRNA(Glu) + L-glutamate + ATP = L-glutamyl-tRNA(Glu) + AMP + diphosphate. In terms of biological role, catalyzes the attachment of glutamate to tRNA(Glu) in a two-step reaction: glutamate is first activated by ATP to form Glu-AMP and then transferred to the acceptor end of tRNA(Glu). The sequence is that of Glutamate--tRNA ligase from Bradyrhizobium sp. (strain BTAi1 / ATCC BAA-1182).